A 380-amino-acid polypeptide reads, in one-letter code: uncharacterized protein (380 aa).

The 4Fe-4S ferredoxin-type domain occupies 287–318 (LRPKIYQDKCKNCRECLVEKYCPTFAIKRENG).

This is an uncharacterized protein from Methanocaldococcus jannaschii (strain ATCC 43067 / DSM 2661 / JAL-1 / JCM 10045 / NBRC 100440) (Methanococcus jannaschii).